We begin with the raw amino-acid sequence, 181 residues long: Ribonuclease M5 (181 aa).

A Toprim domain is found at 5–88; that stretch reads KEIIVVEGKD…IKHAYLNTKD (84 aa). Residues Glu-11, Asp-57, and Asp-59 each contribute to the Mg(2+) site.

It belongs to the ribonuclease M5 family. Mg(2+) is required as a cofactor.

The protein resides in the cytoplasm. It carries out the reaction Endonucleolytic cleavage of RNA, removing 21 and 42 nucleotides, respectively, from the 5'- and 3'-termini of a 5S-rRNA precursor.. In terms of biological role, required for correct processing of both the 5' and 3' ends of 5S rRNA precursor. Cleaves both sides of a double-stranded region yielding mature 5S rRNA in one step. This Borreliella burgdorferi (strain ATCC 35210 / DSM 4680 / CIP 102532 / B31) (Borrelia burgdorferi) protein is Ribonuclease M5.